A 555-amino-acid polypeptide reads, in one-letter code: Formate--tetrahydrofolate ligase (555 aa).

Thr-65 to Ser-72 is a binding site for ATP.

It belongs to the formate--tetrahydrofolate ligase family.

It carries out the reaction (6S)-5,6,7,8-tetrahydrofolate + formate + ATP = (6R)-10-formyltetrahydrofolate + ADP + phosphate. It participates in one-carbon metabolism; tetrahydrofolate interconversion. This is Formate--tetrahydrofolate ligase from Staphylococcus aureus (strain COL).